Here is a 411-residue protein sequence, read N- to C-terminus: Arginase (411 aa).

A disordered region spans residues 83–106 (NNYINNNDNNNDNNNDNNNDNNNN). Mn(2+)-binding residues include His-193, Asp-216, His-218, and Asp-220. Asn-222, Ser-229, and Asp-274 together coordinate L-arginine. 2 residues coordinate Mn(2+): Asp-323 and Asp-325.

It belongs to the arginase family. As to quaternary structure, homotrimer; oligomerization is dependent on Mn(2+) binding. It depends on Mn(2+) as a cofactor.

It catalyses the reaction L-arginine + H2O = urea + L-ornithine. Its pathway is nitrogen metabolism; urea cycle; L-ornithine and urea from L-arginine: step 1/1. With respect to regulation, feedback inhibition by product L-ornithine,. Inhibited by 2(S)-amino-6-boronohexanoic acid (ABH); however, with less efficiency than human ARG1. Functionally, catalyzes the hydrolysis of L-arginine into urea and L-ornithine, which is a precursor for polyamine biosynthesis. May play a role in parasite intra-hepatic development during the host liver stage. This Plasmodium falciparum (isolate 3D7) protein is Arginase.